We begin with the raw amino-acid sequence, 446 residues long: D(1A) dopamine receptor (446 aa).

The Extracellular portion of the chain corresponds to 1 to 22 (MPLNDTTMDRRGLVVERDFSFR). An N-linked (GlcNAc...) asparagine glycan is attached at N4. A helical transmembrane segment spans residues 23–48 (ILTACFLSLLILSTLLGNTLVCAAVI). The Cytoplasmic portion of the chain corresponds to 49–59 (RFRHLRSKVTN). The helical transmembrane segment at 60-86 (FFVISLAVSDLLVAVLVMPWKAVAEIA) threads the bilayer. The Extracellular portion of the chain corresponds to 87 to 95 (GFWPFGSFC). A disulfide bond links C95 and C185. A helical membrane pass occupies residues 96–118 (NIWVAFDIMCSTASILNLCVISV). Residues 119–137 (DRYWAISSPFRYERKMTPK) are Cytoplasmic-facing. The chain crosses the membrane as a helical span at residues 138–162 (AAFILISVAWTLSVLISFIPVQLNW). The Extracellular portion of the chain corresponds to 163 to 191 (HKARPLSSPDGNVSSQDETMDNCDSSLSR). Residues 192 to 217 (TYAISSSLISFYIPVAIMIVTYTRIY) traverse the membrane as a helical segment. The Cytoplasmic portion of the chain corresponds to 218–271 (RIAQKQIRRISALERAAVHAKNCQNTTGNGANVECSQPESSFKMSFKRETKVLK). The chain crosses the membrane as a helical span at residues 272-298 (TLSVIMGVFVCCWLPFFILNCMVPFCE). The Extracellular portion of the chain corresponds to 299–315 (SDLPSGETKPFCIDSIT). A helical transmembrane segment spans residues 316–340 (FDVFVWFGWANSSLNPIIYAFNADF). Residues 341 to 446 (RKAFSTLLGC…PITQNGQHKT (106 aa)) are Cytoplasmic-facing. Residues C350 and C354 are each lipidated (S-palmitoyl cysteine).

This sequence belongs to the G-protein coupled receptor 1 family. As to quaternary structure, interacts with DNAJC14 via its C-terminus.

It is found in the cell membrane. The protein resides in the endoplasmic reticulum membrane. Its subcellular location is the cell projection. The protein localises to the cilium membrane. It localises to the dendrite. It is found in the dendritic spine. In terms of biological role, this is one of the five types (D1 to D5) of receptors for dopamine. The activity of this receptor is mediated by G proteins which activate adenylyl cyclase. This is D(1A) dopamine receptor (DRD1) from Didelphis virginiana (North American opossum).